A 198-amino-acid chain; its full sequence is FMN-dependent NADH:quinone oxidoreductase (198 aa).

FMN-binding positions include Ser10, 16 to 18, 94 to 97, and 138 to 141; these read SQS, MYNF, and TRGG.

The protein belongs to the azoreductase type 1 family. Homodimer. The cofactor is FMN.

It carries out the reaction 2 a quinone + NADH + H(+) = 2 a 1,4-benzosemiquinone + NAD(+). The enzyme catalyses N,N-dimethyl-1,4-phenylenediamine + anthranilate + 2 NAD(+) = 2-(4-dimethylaminophenyl)diazenylbenzoate + 2 NADH + 2 H(+). Its function is as follows. Quinone reductase that provides resistance to thiol-specific stress caused by electrophilic quinones. Also exhibits azoreductase activity. Catalyzes the reductive cleavage of the azo bond in aromatic azo compounds to the corresponding amines. The sequence is that of FMN-dependent NADH:quinone oxidoreductase from Shewanella baltica (strain OS185).